The primary structure comprises 317 residues: L-lactate dehydrogenase (317 aa).

Residues Val-17, Asp-38, Lys-43, Tyr-69, and 83-84 each bind NAD(+); that span reads GA. Substrate-binding residues include Gln-86 and Arg-92. Residues Ser-105, 122-124, and Ser-147 contribute to the NAD(+) site; that span reads ATN. Residue 124-127 participates in substrate binding; that stretch reads NPVD. 152–155 contributes to the substrate binding site; that stretch reads DSAR. The beta-D-fructose 1,6-bisphosphate site is built by Arg-157 and His-172. The Proton acceptor role is filled by His-179. Tyr-224 is subject to Phosphotyrosine. Thr-233 is a substrate binding site.

This sequence belongs to the LDH/MDH superfamily. LDH family. As to quaternary structure, homotetramer.

The protein resides in the cytoplasm. It carries out the reaction (S)-lactate + NAD(+) = pyruvate + NADH + H(+). It participates in fermentation; pyruvate fermentation to lactate; (S)-lactate from pyruvate: step 1/1. With respect to regulation, allosterically activated by fructose 1,6-bisphosphate (FBP). In terms of biological role, catalyzes the conversion of lactate to pyruvate. This chain is L-lactate dehydrogenase, found in Bacillus velezensis (strain DSM 23117 / BGSC 10A6 / LMG 26770 / FZB42) (Bacillus amyloliquefaciens subsp. plantarum).